We begin with the raw amino-acid sequence, 311 residues long: Putative HTH-type transcriptional regulatory protein PTO0557 (311 aa).

The HTH cro/C1-type domain maps to 132–186; sequence MRRIRELKGYSVGYLSSKLGISRRSISLYESGSSATIDIYLKLEETLGEDLTKDI. Residues 143-162 constitute a DNA-binding region (H-T-H motif); that stretch reads VGYLSSKLGISRRSISLYES.

The chain is Putative HTH-type transcriptional regulatory protein PTO0557 from Picrophilus torridus (strain ATCC 700027 / DSM 9790 / JCM 10055 / NBRC 100828 / KAW 2/3).